Here is a 247-residue protein sequence, read N- to C-terminus: MESRFIKAERDTKLKLNYDAGNIISPKVHSVGVLALGSYLENHGPVLPIDTDIKIASYLALNASIKTGAKFIGTVYPATEYPYVKHGIHVSVKDLIENIVSIMKLANKYIGIDKSVIVNAHGGNLPLKKHINVIERETGMKIVMNNKIVEIEGPHAGSGETSLGYVIGIADVERMNEIDFKKYPEIGMVGLKSARKLNKKIDEGAKIVEKEGVKINPKLGRKLLNIALNDIINDIKHLIRMDKNETK.

Glu-41, His-43, Asp-52, and His-121 together coordinate Fe cation.

This sequence belongs to the creatininase superfamily. FAPy deformylase family. Homodimer. It depends on Fe(2+) as a cofactor. The cofactor is Zn(2+).

The catalysed reaction is 2-amino-5-formylamino-6-(5-phospho-D-ribosylamino)pyrimidin-4(3H)-one + H2O = 2,5-diamino-6-(1-D-ribosylamino)pyrimidin-4(3H)-one 5'-phosphate + formate + H(+). It participates in cofactor biosynthesis; coenzyme F420 biosynthesis. Its pathway is cofactor biosynthesis; riboflavin biosynthesis. Its function is as follows. Catalyzes the hydrolysis of the formamide of 2-amino-5-formylamino-6-ribosylamino-4(3H)-pyrimidinone 5'-monophosphate (FAPy) to form 2,5-diamino-6-ribosylamino-4(3H)-pyrimidinone 5'-phosphate (APy). The protein is 2-amino-5-formylamino-6-ribosylaminopyrimidin-4(3H)-one 5'-monophosphate deformylase of Methanothermus fervidus (strain ATCC 43054 / DSM 2088 / JCM 10308 / V24 S).